Reading from the N-terminus, the 144-residue chain is Transcription antitermination protein NusB (144 aa).

It belongs to the NusB family.

In terms of biological role, involved in transcription antitermination. Required for transcription of ribosomal RNA (rRNA) genes. Binds specifically to the boxA antiterminator sequence of the ribosomal RNA (rrn) operons. In Pelotomaculum thermopropionicum (strain DSM 13744 / JCM 10971 / SI), this protein is Transcription antitermination protein NusB.